Here is a 107-residue protein sequence, read N- to C-terminus: Large ribosomal subunit protein uL24 (107 aa).

Belongs to the universal ribosomal protein uL24 family. As to quaternary structure, part of the 50S ribosomal subunit.

One of two assembly initiator proteins, it binds directly to the 5'-end of the 23S rRNA, where it nucleates assembly of the 50S subunit. Functionally, one of the proteins that surrounds the polypeptide exit tunnel on the outside of the subunit. The protein is Large ribosomal subunit protein uL24 of Thermoanaerobacter pseudethanolicus (strain ATCC 33223 / 39E) (Clostridium thermohydrosulfuricum).